The following is a 491-amino-acid chain: Ribonuclease Y (491 aa).

Residues 4-24 (LIATVGVVAVAALVIAIFVVI) form a helical membrane-spanning segment. A KH domain is found at 181–247 (VVSVVHLPGD…RVALERLVDD (67 aa)). Positions 307 to 400 (VLKHLVETAH…TQAADAISGG (94 aa)) constitute an HD domain.

Belongs to the RNase Y family.

The protein resides in the cell membrane. Functionally, endoribonuclease that initiates mRNA decay. This chain is Ribonuclease Y, found in Acidothermus cellulolyticus (strain ATCC 43068 / DSM 8971 / 11B).